The following is a 135-amino-acid chain: Fatty acid-binding protein 5 (135 aa).

Alanine 2 is subject to N-acetylalanine. Residue serine 3 is modified to Phosphoserine. The Nuclear localization signal motif lies at 24–34 (KELGVGLALRK). Cysteine 43 and arginine 109 together coordinate N-eicosanoyl ethanolamine. Cysteine 120 and cysteine 127 are oxidised to a cystine. 129–131 (RVY) provides a ligand contact to (9Z,12Z)-octadecadienoate. Tyrosine 131 contributes to the N-eicosanoyl ethanolamine binding site. Tyrosine 131 contributes to the hexadecanoate binding site. Residue tyrosine 131 is modified to Phosphotyrosine.

The protein belongs to the calycin superfamily. Fatty-acid binding protein (FABP) family. Monomer.

The protein resides in the cytoplasm. It localises to the nucleus. It is found in the synapse. The protein localises to the postsynaptic density. Its subcellular location is the secreted. It catalyses the reaction hexadecanoate(out) = hexadecanoate(in). It carries out the reaction (9Z,12Z)-octadecadienoate(out) = (9Z,12Z)-octadecadienoate(in). The catalysed reaction is (9Z)-octadecenoate(out) = (9Z)-octadecenoate(in). Its function is as follows. Intracellular carrier for long-chain fatty acids and related active lipids, such as endocannabinoids, that regulate the metabolism and actions of the ligands they bind. In addition to the cytosolic transport, selectively delivers specific fatty acids from the cytosol to the nucleus, wherein they activate nuclear receptors. Delivers retinoic acid to the nuclear receptor peroxisome proliferator-activated receptor delta; which promotes proliferation and survival. May also serve as a synaptic carrier of endocannabinoid at central synapses and thus controls retrograde endocannabinoid signaling. Modulates inflammation by regulating PTGES induction via NF-kappa-B activation, and prostaglandin E2 (PGE2) biosynthesis during inflammation. The polypeptide is Fatty acid-binding protein 5 (Rattus norvegicus (Rat)).